The following is a 286-amino-acid chain: Interferon-induced 35 kDa protein homolog (286 aa).

The segment at 5–26 is leucine-zipper; it reads LQTVLYSLQEEQARLKMRLQEL. 2 NID domains span residues 81–170 and 183–266; these read ALVT…GDVE and FADE…GEVE.

It belongs to the NMI family. Homodimer. Also interacts with B-ATF. Interacts with TRIM21. Interacts (via NID domains) with NMI (via NID domains); the interaction is direct and is facilitated by TRIM21. Post-translationally, phosphorylated. Dephosphorylation correlates with the formation of a complex with NMI.

Its subcellular location is the cytoplasm. The protein localises to the nucleus. The protein resides in the secreted. In terms of biological role, acts as a signaling pathway regulator involved in innate immune system response. In response to interferon IFN-alpha, associates in a complex with transcriptional regulator NMI to regulate immune response; the complex formation prevents proteasome-mediated degradation of IFI35 and correlates with IFI35 dephosphorylation. In complex with NMI, inhibits virus-triggered type I interferon/IFN-beta production. In complex with NMI, negatively regulates nuclear factor NF-kappa-B signaling by inhibiting the nuclear translocation, activation and transcription of the NF-kappa-B subunit p65/RELA, resulting in the inhibition of endothelial cell proliferation, migration and re-endothelialization of injured arteries. Beside its role as an intracellular signaling pathway regulator, also functions extracellularly as damage-associated molecular patterns (DAMPs) to promote inflammation when actively released by macrophage to the extracellular space during cell injury and pathogen invasion. Macrophage-secreted IFI35 activates NF-kappa-B signaling in adjacent macrophages through Toll-like receptor 4/TLR4 activation, thereby inducing NF-kappa-B translocation from the cytoplasm into the nucleus which promotes the release of pro-inflammatory cytokines. The polypeptide is Interferon-induced 35 kDa protein homolog (Mus musculus (Mouse)).